Here is a 296-residue protein sequence, read N- to C-terminus: MFYANMKEFELIKLVERLFGDEDVITPAGKHDAAYVKIGNRLIVLTCDTVNEKSDFPPYMLPEEMGWMAIAVTLSDVAACGARPLYFLSSISLKSIEFFEDILLGIKRCADRFGVKVVGGDIDFSEITTIAGFAIGEARRHITRRGAKVGEGVFITDLPGKAQLCLEMLERGAKREELPYAEKLYTPVPRIEEGMRIARYASAMTDVSDSLAVSLHQISQSSNVKIVLDNIVLSHLSPAENALELFLYGGGDFELVYTAKSSDDGIRIGRVERGKGVFAEIDGKTFEVEFRGYSHF.

Mg(2+)-binding residues include Asp-32, Thr-46, and Asp-48. Residue Asp-55 participates in substrate binding. The Mg(2+) site is built by Asp-76 and Asp-121. ATP contacts are provided by residues 120 to 121 and Arg-144; that span reads GD. Asp-206 lines the Mg(2+) pocket. Ser-208 provides a ligand contact to ATP. Asp-209 contributes to the Mg(2+) binding site. Position 293 (Tyr-293) interacts with substrate.

Belongs to the thiamine-monophosphate kinase family.

The enzyme catalyses thiamine phosphate + ATP = thiamine diphosphate + ADP. It functions in the pathway cofactor biosynthesis; thiamine diphosphate biosynthesis; thiamine diphosphate from thiamine phosphate: step 1/1. In terms of biological role, catalyzes the ATP-dependent phosphorylation of thiamine-monophosphate (TMP) to form thiamine-pyrophosphate (TPP), the active form of vitamin B1. In Archaeoglobus fulgidus (strain ATCC 49558 / DSM 4304 / JCM 9628 / NBRC 100126 / VC-16), this protein is Thiamine-monophosphate kinase.